The chain runs to 66 residues: Large ribosomal subunit protein bL35 (66 aa).

The protein belongs to the bacterial ribosomal protein bL35 family.

The sequence is that of Large ribosomal subunit protein bL35 from Methylobacterium nodulans (strain LMG 21967 / CNCM I-2342 / ORS 2060).